A 301-amino-acid polypeptide reads, in one-letter code: Acetylglutamate kinase (301 aa).

Substrate is bound by residues 68–69, R90, and N195; that span reads GG.

This sequence belongs to the acetylglutamate kinase family. ArgB subfamily.

The protein resides in the cytoplasm. It catalyses the reaction N-acetyl-L-glutamate + ATP = N-acetyl-L-glutamyl 5-phosphate + ADP. The protein operates within amino-acid biosynthesis; L-arginine biosynthesis; N(2)-acetyl-L-ornithine from L-glutamate: step 2/4. Catalyzes the ATP-dependent phosphorylation of N-acetyl-L-glutamate. This chain is Acetylglutamate kinase, found in Pseudomonas aeruginosa (strain LESB58).